We begin with the raw amino-acid sequence, 717 residues long: UV-stimulated scaffold protein A (717 aa).

Residues 2–145 are VHS-like; it reads DQKLSQLIEE…HFLKHTKKVD (144 aa). Residues 169-199 are a coiled coil; the sequence is KIHRESADRAKREMEEMYDEIECCLTEVENC. Disordered stretches follow at residues 231–253, 277–301, 389–418, and 479–503; these read PLSPDLATPRESGLSGPQDEEQP, QTAMKDSSRDEDEPSDPDDFLRSHG, PGRGQRSRTEALEDSEDEDQDFVEVPEKEG, and CLSSPSPSSTRVLPGPEEAQKQAER. S284, S291, and S403 each carry phosphoserine. Composition is skewed to acidic residues over residues 285–294 and 400–412; these read RDEDEPSDPD and LEDSEDEDQDFVE. K416 is covalently cross-linked (Glycyl lysine isopeptide (Lys-Gly) (interchain with G-Cter in ubiquitin)). The span at 479 to 489 shows a compositional bias: polar residues; the sequence is CLSSPSPSSTR. Residues 571–598 form a UVSSA-type zinc finger; the sequence is QHKCRALRPNGRLCERQDRLKCPFHGKI. Residues C574, C584, C592, and H595 each coordinate Zn(2+). The interval 595-672 is disordered; sequence HGKIIPRDDK…HPNLTDLRER (78 aa). The segment covering 599–618 has biased composition (basic and acidic residues); that stretch reads IPRDDKGQPLNPEDRAREQR. Over residues 652–664 the composition is skewed to basic residues; the sequence is SSKKGKGKKKKHP.

The protein belongs to the UVSSA family. In terms of assembly, interacts with the elongating form of RNA polymerase II (RNA pol IIo) during transcription stress. Interacts with the TFIIH complex during transcription stress. Interacts with ERCC6. Interacts with ERCC8. Interacts with USP7. Post-translationally, monoubiquitinated at Lys-416 in response to transcription stress; this promotes efficient transfer of TFIIH to stalled RNA polymerase II.

Its subcellular location is the chromosome. Functionally, factor involved in transcription-coupled nucleotide excision repair (TC-NER), a mechanism that rapidly removes RNA polymerase II-blocking lesions from the transcribed strand of active genes. Acts as a key adapter that promotes recruitment of factors involved in TC-NER. Facilitates the ubiquitination of the elongating form of RNA polymerase II (RNA pol IIo) at DNA damage sites, thereby promoting RNA pol IIo backtracking and access by the TC-NER machinery to lesion sites. Also promotes stabilization of ERCC6/CSB by recruiting deubiquitinating enzyme USP7 to TC-NER complexes, preventing UV-induced degradation of ERCC6 by the proteasome. Mediates the recruitment of the TFIIH complex and other factors that are required for nucleotide excision repair to RNA polymerase II. Also required to inactivate stalled RNA polymerase II by blocking the access of TCEA1/TFIIS, thereby preventing reactivation of RNA polymerase II. Not involved in processing oxidative damage. This Mus musculus (Mouse) protein is UV-stimulated scaffold protein A (Uvssa).